The chain runs to 379 residues: Pre-mRNA-processing protein 45 (379 aa).

A compositionally biased stretch (pro residues) spans 1 to 10; sequence MFSNRLPPPK. Disordered regions lie at residues 1-22 and 353-379; these read MFSN…ALSS and SEGA…NYGA. Positions 368 to 379 are enriched in basic and acidic residues; the sequence is AESDDKSDNYGA.

It belongs to the SNW family. As to quaternary structure, belongs to the CWC complex (or CEF1-associated complex), a spliceosome sub-complex reminiscent of a late-stage spliceosome composed of the U2, U5 and U6 snRNAs and at least BUD13, BUD31, BRR2, CDC40, CEF1, CLF1, CUS1, CWC2, CWC15, CWC21, CWC22, CWC23, CWC24, CWC25, CWC27, ECM2, HSH155, IST3, ISY1, LEA1, MSL1, NTC20, PRP8, PRP9, PRP11, PRP19, PRP21, PRP22, PRP45, PRP46, SLU7, SMB1, SMD1, SMD2, SMD3, SMX2, SMX3, SNT309, SNU114, SPP2, SYF1, SYF2, RSE1 and YJU2. Interacts with CLF1, PRP22 and PRP46. Interacts with SPP382.

It localises to the nucleus. In terms of biological role, involved in pre-mRNA splicing. Associated with the spliceosome throughout the splicing reactions, until after the second catalytic step. The protein is Pre-mRNA-processing protein 45 (PRP45) of Saccharomyces cerevisiae (strain ATCC 204508 / S288c) (Baker's yeast).